Reading from the N-terminus, the 334-residue chain is Aspartate carbamoyltransferase catalytic subunit (334 aa).

Carbamoyl phosphate is bound by residues arginine 71 and threonine 72. Residue lysine 99 coordinates L-aspartate. The carbamoyl phosphate site is built by arginine 121, histidine 151, and glutamine 154. L-aspartate-binding residues include arginine 184 and arginine 239. Carbamoyl phosphate-binding residues include glycine 280 and proline 281.

It belongs to the aspartate/ornithine carbamoyltransferase superfamily. ATCase family. As to quaternary structure, heterododecamer (2C3:3R2) of six catalytic PyrB chains organized as two trimers (C3), and six regulatory PyrI chains organized as three dimers (R2).

It carries out the reaction carbamoyl phosphate + L-aspartate = N-carbamoyl-L-aspartate + phosphate + H(+). It participates in pyrimidine metabolism; UMP biosynthesis via de novo pathway; (S)-dihydroorotate from bicarbonate: step 2/3. Its function is as follows. Catalyzes the condensation of carbamoyl phosphate and aspartate to form carbamoyl aspartate and inorganic phosphate, the committed step in the de novo pyrimidine nucleotide biosynthesis pathway. The sequence is that of Aspartate carbamoyltransferase catalytic subunit from Pseudomonas putida (strain GB-1).